We begin with the raw amino-acid sequence, 104 residues long: Large ribosomal subunit protein bL21 (104 aa).

Belongs to the bacterial ribosomal protein bL21 family. In terms of assembly, part of the 50S ribosomal subunit. Contacts protein L20.

In terms of biological role, this protein binds to 23S rRNA in the presence of protein L20. The sequence is that of Large ribosomal subunit protein bL21 from Streptococcus gordonii (strain Challis / ATCC 35105 / BCRC 15272 / CH1 / DL1 / V288).